Here is a 94-residue protein sequence, read N- to C-terminus: Large ribosomal subunit protein uL23 (94 aa).

The protein belongs to the universal ribosomal protein uL23 family. Part of the 50S ribosomal subunit. Contacts protein L29, and trigger factor when it is bound to the ribosome.

Functionally, one of the early assembly proteins it binds 23S rRNA. One of the proteins that surrounds the polypeptide exit tunnel on the outside of the ribosome. Forms the main docking site for trigger factor binding to the ribosome. The chain is Large ribosomal subunit protein uL23 from Pelobacter propionicus (strain DSM 2379 / NBRC 103807 / OttBd1).